A 570-amino-acid chain; its full sequence is Capsid vertex component 2 (570 aa).

The interval 1 to 54 (MALSGHVLIDPARLPRDTGPELMWAPSLRNSLRVSPEALELAEREAERARSERW) is interaction with major capsid protein/MCP. The interval 102 to 123 (QVRSPSTGGRSAPAPPSPSPAQ) is disordered.

This sequence belongs to the herpesviridae CVC2 protein family. Heterodimerizes with CVC1. Interacts with major capsid protein/MCP and triplex capsid protein 1/TRX1 at the pentamer vertices. Interacts with the large tegument protein/LTP.

It localises to the virion. The protein resides in the host nucleus. Functionally, capsid vertex-specific component that plays a role during viral DNA encapsidation, assuring correct genome cleavage and presumably stabilizing capsids that contain full-length viral genomes. Participates in the interaction between the capsid and the tegument through interaction with the large tegument protein/LTP. This is Capsid vertex component 2 from Homo sapiens (Human).